The sequence spans 142 residues: Large ribosomal subunit protein uL13 (142 aa).

The protein belongs to the universal ribosomal protein uL13 family. In terms of assembly, part of the 50S ribosomal subunit.

This protein is one of the early assembly proteins of the 50S ribosomal subunit, although it is not seen to bind rRNA by itself. It is important during the early stages of 50S assembly. The polypeptide is Large ribosomal subunit protein uL13 (Pseudomonas syringae pv. tomato (strain ATCC BAA-871 / DC3000)).